A 144-amino-acid chain; its full sequence is uncharacterized protein (144 aa).

N-linked (GlcNAc...) asparagine glycosylation is found at Asn14 and Asn15. A helical transmembrane segment spans residues Phe90 to Leu110. The disordered stretch occupies residues Asn120–Ile144.

It is found in the membrane. This is an uncharacterized protein from Saccharomyces cerevisiae (strain ATCC 204508 / S288c) (Baker's yeast).